The primary structure comprises 599 residues: UPF0313 protein UNCMA_01890 (599 aa).

Positions 281–557 (EDIPALRTVR…RALLQYKNPE (277 aa)) constitute a Radical SAM core domain. Positions 299, 303, and 306 each coordinate [4Fe-4S] cluster.

It belongs to the UPF0313 family. [4Fe-4S] cluster serves as cofactor.

This Methanocella arvoryzae (strain DSM 22066 / NBRC 105507 / MRE50) protein is UPF0313 protein UNCMA_01890.